The chain runs to 183 residues: UPF0302 protein BH1670 (183 aa).

The protein belongs to the UPF0302 family.

This Halalkalibacterium halodurans (strain ATCC BAA-125 / DSM 18197 / FERM 7344 / JCM 9153 / C-125) (Bacillus halodurans) protein is UPF0302 protein BH1670.